Here is a 225-residue protein sequence, read N- to C-terminus: Heptaprenylglyceryl phosphate synthase (225 aa).

Sn-glycerol 1-phosphate is bound at residue lysine 6. Mg(2+)-binding residues include aspartate 8 and threonine 34. Sn-glycerol 1-phosphate-binding positions include 153-158, glycine 183, and 203-204; these read YVEYSG and GN.

It belongs to the GGGP/HepGP synthase family. Group I subfamily. In terms of assembly, homodimer. Mg(2+) serves as cofactor.

The enzyme catalyses sn-glycerol 1-phosphate + all-trans-heptaprenyl diphosphate = 3-heptaprenyl-sn-glycero-1-phosphate + diphosphate. It participates in membrane lipid metabolism; glycerophospholipid metabolism. In terms of biological role, prenyltransferase that catalyzes in vivo the transfer of the heptaprenyl moiety of heptaprenyl pyrophosphate (HepPP; 35 carbon atoms) to the C3 hydroxyl of sn-glycerol-1-phosphate (G1P), producing heptaprenylglyceryl phosphate (HepGP). This reaction is an ether-bond-formation step in the biosynthesis of archaea-type G1P-based membrane lipids found in Bacillales. To a much lesser extent, is also able to use geranylgeranyl diphosphate (GGPP; C20) as the prenyl donor. The chain is Heptaprenylglyceryl phosphate synthase from Listeria monocytogenes serovar 1/2a (strain ATCC BAA-679 / EGD-e).